A 176-amino-acid polypeptide reads, in one-letter code: Protein singles bar (176 aa).

Helical transmembrane passes span 13–35, 71–91, 111–131, and 140–160; these read LGIR…LSRI, FLAT…CYAF, LASC…VVWL, and GFWA…AGIL. The MARVEL domain occupies 30–173; that stretch reads FVLSRIGLLK…DAYLAFRHFR (144 aa).

It localises to the membrane. Essential for myoblast fusion in developing embryos and pupae, and consequently is essential for muscle formation in adults. Required for progression past the pre-fusion complex stage of myoblast fusion. This chain is Protein singles bar, found in Drosophila melanogaster (Fruit fly).